A 309-amino-acid polypeptide reads, in one-letter code: Probable 2,4-dienoyl-CoA reductase 3 [(3E)-enoyl-CoA-producing] (309 aa).

NADP(+) contacts are provided by residues 32-37 (GGGTGI), R57, and D83. R57 contributes to the substrate binding site. Substrate is bound by residues F116 and S124. Residue Y166 is the Proton acceptor of the active site. NADP(+) contacts are provided by residues K181 and 207–210 (PGPI). R218 provides a ligand contact to substrate.

This sequence belongs to the short-chain dehydrogenases/reductases (SDR) family. 2,4-dienoyl-CoA reductase subfamily.

It carries out the reaction a (2E,4E)-dienoyl-CoA + NADPH + H(+) = a 4,5-saturated-(3E)-enoyl-CoA + NADP(+). The catalysed reaction is a (2E,4Z)-dienoyl-CoA + NADPH + H(+) = a 4,5-saturated-(3E)-enoyl-CoA + NADP(+). In terms of biological role, auxiliary enzyme of beta-oxidation. It participates in the metabolism of unsaturated fatty enoyl-CoA esters having double bonds in both even- and odd-numbered positions. Catalyzes the NADP-dependent reduction of 2,4-dienoyl-CoA to yield trans-3-enoyl-CoA. The protein is Probable 2,4-dienoyl-CoA reductase 3 [(3E)-enoyl-CoA-producing] of Caenorhabditis elegans.